The following is a 541-amino-acid chain: uncharacterized protein (541 aa).

5 consecutive transmembrane segments (helical) span residues 10–32 (LNNQ…KINI), 39–57 (SSAI…YTLP), 62–84 (TLGL…FFSL), 91–113 (LSLG…TYLF), and 146–168 (APAA…IQII). RCK C-terminal domains follow at residues 183–260 (LNKE…DDLE) and 268–352 (TPVD…IFGN). A run of 6 helical transmembrane segments spans residues 357-375 (SYNF…GFIL), 385-407 (SGIF…SNIY), 428-447 (GLVL…ILAT), 452-474 (GLQL…VFIC), 481-500 (PFLS…PGLA), and 515-537 (YATV…IFIV).

Belongs to the AAE transporter (TC 2.A.81) family.

The protein resides in the cell membrane. This is an uncharacterized protein from Desulfotalea psychrophila (strain LSv54 / DSM 12343).